We begin with the raw amino-acid sequence, 620 residues long: Protein CNGC15b (620 aa).

The next 6 membrane-spanning stretches (helical) occupy residues 73–93, 102–122, 161–181, 198–218, 237–257, and 356–376; these read IFLV…YLPI, IGIA…VFYV, GFFL…WIVI, FIII…SSQI, LMLY…LSIE, and GEIM…ALLI. Position 462-559 (462-559) interacts with a nucleoside 3',5'-cyclic phosphate; the sequence is LFDAMDERML…SSTRTVKAIS (98 aa).

This sequence belongs to the cyclic nucleotide-gated cation channel (TC 1.A.1.5) family. In terms of assembly, interacts (via N-terminus) with DMI1 (via c-terminus). The Nod factor has no effect on this interaction, implying that the complex is maintained after activation. As to expression, expressed in roots, stems, leaves, flowers and pods.

The protein resides in the nucleus membrane. Functionally, cyclic nucleotide-gated channel involved in the establishment of both rhizobial and mycorrhizal associations. Required for full activation of nuclear-localized Ca(2+) oscillations by Nod and Myc factors. Simultaneous activation of the K(+)-permeable channel DMI1 and the Ca(2+) channel CNGC15 can give rise to sustained Ca(2+) oscillations. May function during fertilization in both female and male gametophytic Ca(2+) signaling. This chain is Protein CNGC15b, found in Medicago truncatula (Barrel medic).